A 103-amino-acid polypeptide reads, in one-letter code: Large ribosomal subunit protein bL21 (103 aa).

The protein belongs to the bacterial ribosomal protein bL21 family. As to quaternary structure, part of the 50S ribosomal subunit. Contacts protein L20.

Its function is as follows. This protein binds to 23S rRNA in the presence of protein L20. This Shewanella loihica (strain ATCC BAA-1088 / PV-4) protein is Large ribosomal subunit protein bL21.